The chain runs to 241 residues: Adenylate kinase 3 (241 aa).

38–43 (GCGKGT) lines the ATP pocket. An NMP region spans residues 58-87 (ATGDMLRAAVAAKTPLGIKAKEAMDKGELV). Residues Thr-59, Arg-64, 85-87 (ELV), 113-116 (GFPR), and Gln-120 contribute to the AMP site. An LID region spans residues 154-191 (GRWIHPSSGRSYHTKFAPPKTPGLDDVTGEPLIQRKDD). Arg-155 lines the ATP pocket. AMP is bound by residues Arg-188 and Arg-199.

The protein belongs to the adenylate kinase family.

The protein resides in the cytoplasm. It catalyses the reaction AMP + ATP = 2 ADP. Catalyzes the reversible transfer of the terminal phosphate group between ATP and AMP. Plays an important role in cellular energy homeostasis and in adenine nucleotide metabolism. In Oryza sativa subsp. japonica (Rice), this protein is Adenylate kinase 3 (ADK-A).